The following is a 130-amino-acid chain: MSEPKDQSIEDELDAALAALDSGPLPTSTLPEPQPSPEQATAGQPPAEATAPTPAFTPPPSTGSPTLDALEENRRPKASTVCEHCPNSVWFASPAEVKCYCRVMFLVTWSSKEPNQITHCDGEFLGQEQE.

The segment at 1–78 is disordered; sequence MSEPKDQSIE…ALEENRRPKA (78 aa). Over residues 37-54 the composition is skewed to low complexity; sequence PEQATAGQPPAEATAPTP.

Functionally, the initiation process of transfer DNA synthesis requires the interaction of at least three plasmid-specific components (TraH, TraI, and TraJ) at the transfer origin resulting in the assembly of a specialized nucleoprotein complex - the relaxosome. In Escherichia coli, this protein is Protein TraH (traH).